Reading from the N-terminus, the 148-residue chain is MMKSRTRRLSLSTLFGALLGVSVAAAWLYYSHRNEAGHGDLHEILHEAVPLDANEREILELKEDAFAQRRREIETRLRAANGKLADAIAKNPAWSPEVEAATQEVERAAGDLQRATLVHVFEMRAGLKPEHRPAYDRVLIDALRRGSQ.

The signal sequence occupies residues 1–26; it reads MMKSRTRRLSLSTLFGALLGVSVAAA. Topologically, residues 28–148 are periplasmic; the sequence is LYYSHRNEAG…LIDALRRGSQ (121 aa). The stretch at 54-117 forms a coiled coil; that stretch reads NEREILELKE…AAGDLQRATL (64 aa).

The protein to A.xylosoxydans NccX.

It is found in the periplasm. In terms of biological role, cnrH alone is able to activate cnr expression, while both CnrY and CrnR (CnrX) are needed for nickel induction of CnrH. Has been suggested to bind nickel. This Cupriavidus metallidurans (strain ATCC 43123 / DSM 2839 / NBRC 102507 / CH34) (Ralstonia metallidurans) protein is Nickel and cobalt resistance protein CnrR (cnrR).